A 221-amino-acid polypeptide reads, in one-letter code: Histone H1.3 (221 aa).

Residues 1–17 (MSETAPVAPAAPAPAEK) show a composition bias toward low complexity. Residues 1 to 42 (MSETAPVAPAAPAPAEKTPVKKKAKKSGVAAGKRKASGPPVS) are disordered. An N-acetylserine modification is found at Ser-2. At Ser-2 the chain carries Phosphoserine. An N6-acetyllysine modification is found at Lys-17. The residue at position 18 (Thr-18) is a Phosphothreonine. A compositionally biased stretch (basic residues) spans 20–36 (VKKKAKKSGVAAGKRKA). An N6-(beta-hydroxybutyryl)lysine mark is found at Lys-35 and Lys-53. Positions 37-110 (SGPPVSELIT…GASGSFKLNK (74 aa)) constitute an H15 domain. Citrulline is present on Arg-55. An N6-(beta-hydroxybutyryl)lysine mark is found at Lys-65, Lys-86, and Lys-91. Residues 87–221 (SLVSKGTLVQ…KAKKAVSKKK (135 aa)) form a disordered region. Ser-105 bears the Phosphoserine; by PKC mark. Lys-107 is modified (N6-(beta-hydroxybutyryl)lysine). Basic residues-rich tracts occupy residues 120–141 (KGKK…KPKK), 150–161 (KAAKKTPKKVKK), 170–187 (KVAK…KKPT), and 194–221 (KAPK…SKKK).

It belongs to the histone H1/H5 family. Post-translationally, H1 histones are progressively phosphorylated during the cell cycle, becoming maximally phosphorylated during late G2 phase and M phase, and being dephosphorylated sharply thereafter. Citrullination at Arg-55 (H1R54ci) by PADI4 takes place within the DNA-binding site of H1 and results in its displacement from chromatin and global chromatin decondensation, thereby promoting pluripotency and stem cell maintenance.

The protein resides in the nucleus. Its subcellular location is the chromosome. In terms of biological role, H1 histones bind to linker DNA between nucleosomes forming the macromolecular structure known as the chromatin fiber. H1 histones are necessary for the condensation of nucleosome chains into higher-order structured fibers. Also acts as a regulator of individual gene transcription through chromatin remodeling, nucleosome spacing and DNA methylation. The polypeptide is Histone H1.3 (Bos taurus (Bovine)).